Consider the following 717-residue polypeptide: DNA ligase (717 aa).

Residues 44-48, 93-94, and glutamate 127 contribute to the NAD(+) site; these read DADYD and SL. Lysine 129 acts as the N6-AMP-lysine intermediate in catalysis. NAD(+) is bound by residues arginine 150, glutamate 186, lysine 302, and lysine 326. 4 residues coordinate Zn(2+): cysteine 431, cysteine 434, cysteine 455, and cysteine 461. The BRCT domain occupies 639-717; the sequence is STDSPVAGKT…EDEWLALIGG (79 aa).

The protein belongs to the NAD-dependent DNA ligase family. LigA subfamily. Mg(2+) is required as a cofactor. The cofactor is Mn(2+).

The catalysed reaction is NAD(+) + (deoxyribonucleotide)n-3'-hydroxyl + 5'-phospho-(deoxyribonucleotide)m = (deoxyribonucleotide)n+m + AMP + beta-nicotinamide D-nucleotide.. In terms of biological role, DNA ligase that catalyzes the formation of phosphodiester linkages between 5'-phosphoryl and 3'-hydroxyl groups in double-stranded DNA using NAD as a coenzyme and as the energy source for the reaction. It is essential for DNA replication and repair of damaged DNA. This Sinorhizobium fredii (strain NBRC 101917 / NGR234) protein is DNA ligase.